Reading from the N-terminus, the 206-residue chain is LexA repressor (206 aa).

Residues 28–48 (RAEIATRLGFKSANAAEEHLK) constitute a DNA-binding region (H-T-H motif). Residues Ser123 and Lys160 each act as for autocatalytic cleavage activity in the active site.

The protein belongs to the peptidase S24 family. In terms of assembly, homodimer.

It carries out the reaction Hydrolysis of Ala-|-Gly bond in repressor LexA.. Represses a number of genes involved in the response to DNA damage (SOS response), including recA and lexA. In the presence of single-stranded DNA, RecA interacts with LexA causing an autocatalytic cleavage which disrupts the DNA-binding part of LexA, leading to derepression of the SOS regulon and eventually DNA repair. The protein is LexA repressor of Shewanella sp. (strain MR-7).